The chain runs to 179 residues: Probable mitochondrial import inner membrane translocase subunit Tim17 1 (179 aa).

3 helical membrane-spanning segments follow: residues 17 to 37, 61 to 81, and 113 to 133; these read CGGAFAMGALGGGAFQAIKGF, LVGGNFAVWGATFSAIDCSLV, and LSSALVGGALLALIEGVGIVV.

Belongs to the Tim17/Tim22/Tim23 family. As to quaternary structure, component of the TIM23 complex at least composed of Tim23, Tim17 (Tim17a1, Tim17a2 or Tim17b1) and a Tim50. The complex interacts with the Tim44 component of the PAM complex.

Its subcellular location is the mitochondrion inner membrane. Functionally, essential component of the TIM23 complex, a complex that mediates the translocation of transit peptide-containing proteins across the mitochondrial inner membrane. The protein is Probable mitochondrial import inner membrane translocase subunit Tim17 1 (Tim17b1) of Drosophila melanogaster (Fruit fly).